The chain runs to 163 residues: Transcriptional repressor NrdR (163 aa).

A zinc finger spans residues 3–34 (CVQCGHLEDKVIDSRMSKDGTTIRRRRVCLRC). In terms of domain architecture, ATP-cone spans 49–139 (LRVVKRDNLR…VYRQFSNVEE (91 aa)).

The protein belongs to the NrdR family. Zn(2+) serves as cofactor.

In terms of biological role, negatively regulates transcription of bacterial ribonucleotide reductase nrd genes and operons by binding to NrdR-boxes. The chain is Transcriptional repressor NrdR from Akkermansia muciniphila (strain ATCC BAA-835 / DSM 22959 / JCM 33894 / BCRC 81048 / CCUG 64013 / CIP 107961 / Muc).